The primary structure comprises 289 residues: (3R)-3-[(carboxymethyl)amino]fatty acid oxygenase/decarboxylase (289 aa).

A (3R)-3-[(carboxymethyl)amino]fatty acid-binding residues include Tyr-65, Tyr-70, and Gly-93. Residues His-97 and Asp-99 each contribute to the Fe(2+) site. A (3R)-3-[(carboxymethyl)amino]fatty acid-binding residues include Tyr-100 and Lys-158. Residue His-260 participates in Fe(2+) binding. His-264 contributes to the 2-oxoglutarate binding site. An a (3R)-3-[(carboxymethyl)amino]fatty acid-binding site is contributed by Arg-275.

This sequence belongs to the TfdA dioxygenase family. It depends on Fe(2+) as a cofactor.

The catalysed reaction is a (3R)-3-[(carboxymethyl)amino]fatty acid + 2 2-oxoglutarate + 2 O2 = a (3R)-3-isocyanyl-fatty acid + 2 succinate + 3 CO2 + 2 H2O. It catalyses the reaction a (3R)-3-[(carboxymethyl)amino]fatty acid + 2-oxoglutarate + O2 = a (3R)-3-{[carboxy(hydroxy)methyl]amino}fatty acid + succinate + CO2. It carries out the reaction a (3R)-3-{[carboxy(hydroxy)methyl]amino}fatty acid + 2-oxoglutarate + O2 = a (3R)-3-isocyanyl-fatty acid + succinate + 2 CO2 + 2 H2O. Its function is as follows. Involved in the biosynthesis of a unique class of isonitrile lipopeptides (INLPs) that seem to play a role in metal acquisition. Catalyzes the conversion of (3R)-3-[(carboxymethyl)amino]fatty acids to (3R)-3-isocyanyl-fatty acids through an oxidative decarboxylation mechanism, thereby generating the isonitrile group of INLPs. This chain is (3R)-3-[(carboxymethyl)amino]fatty acid oxygenase/decarboxylase, found in Mycobacterium bovis (strain ATCC BAA-935 / AF2122/97).